A 213-amino-acid chain; its full sequence is Thymidylate kinase (213 aa).

10–17 (GLEGAGKT) lines the ATP pocket.

It belongs to the thymidylate kinase family.

The catalysed reaction is dTMP + ATP = dTDP + ADP. Phosphorylation of dTMP to form dTDP in both de novo and salvage pathways of dTTP synthesis. The protein is Thymidylate kinase of Enterobacter sp. (strain 638).